Consider the following 420-residue polypeptide: UDP-N-acetylmuramoylalanine--D-glutamate ligase (420 aa).

109-115 (GSVGKST) provides a ligand contact to ATP.

The protein belongs to the MurCDEF family.

The protein localises to the cytoplasm. The enzyme catalyses UDP-N-acetyl-alpha-D-muramoyl-L-alanine + D-glutamate + ATP = UDP-N-acetyl-alpha-D-muramoyl-L-alanyl-D-glutamate + ADP + phosphate + H(+). Its pathway is cell wall biogenesis; peptidoglycan biosynthesis. In terms of biological role, cell wall formation. Catalyzes the addition of glutamate to the nucleotide precursor UDP-N-acetylmuramoyl-L-alanine (UMA). The protein is UDP-N-acetylmuramoylalanine--D-glutamate ligase of Fervidobacterium nodosum (strain ATCC 35602 / DSM 5306 / Rt17-B1).